Reading from the N-terminus, the 158-residue chain is 6,7-dimethyl-8-ribityllumazine synthase (158 aa).

5-amino-6-(D-ribitylamino)uracil is bound by residues phenylalanine 23, 61-63 (SFE), and 85-87 (AVI). 90 to 91 (ET) provides a ligand contact to (2S)-2-hydroxy-3-oxobutyl phosphate. The Proton donor role is filled by histidine 93. Position 118 (phenylalanine 118) interacts with 5-amino-6-(D-ribitylamino)uracil. Arginine 132 is a binding site for (2S)-2-hydroxy-3-oxobutyl phosphate.

This sequence belongs to the DMRL synthase family.

The enzyme catalyses (2S)-2-hydroxy-3-oxobutyl phosphate + 5-amino-6-(D-ribitylamino)uracil = 6,7-dimethyl-8-(1-D-ribityl)lumazine + phosphate + 2 H2O + H(+). It functions in the pathway cofactor biosynthesis; riboflavin biosynthesis; riboflavin from 2-hydroxy-3-oxobutyl phosphate and 5-amino-6-(D-ribitylamino)uracil: step 1/2. Catalyzes the formation of 6,7-dimethyl-8-ribityllumazine by condensation of 5-amino-6-(D-ribitylamino)uracil with 3,4-dihydroxy-2-butanone 4-phosphate. This is the penultimate step in the biosynthesis of riboflavin. The polypeptide is 6,7-dimethyl-8-ribityllumazine synthase (Prochlorococcus marinus (strain MIT 9215)).